We begin with the raw amino-acid sequence, 255 residues long: Proteasome subunit alpha (255 aa).

The tract at residues 228 to 255 is disordered; the sequence is LLASPAGTSGPTGEPGPAGTAATDGGDL. Positions 232-255 are enriched in low complexity; that stretch reads PAGTSGPTGEPGPAGTAATDGGDL.

It belongs to the peptidase T1A family. In terms of assembly, the 20S proteasome core is composed of 14 alpha and 14 beta subunits that assemble into four stacked heptameric rings, resulting in a barrel-shaped structure. The two inner rings, each composed of seven catalytic beta subunits, are sandwiched by two outer rings, each composed of seven alpha subunits. The catalytic chamber with the active sites is on the inside of the barrel. Has a gated structure, the ends of the cylinder being occluded by the N-termini of the alpha-subunits. Is capped by the proteasome-associated ATPase, ARC.

The protein resides in the cytoplasm. It functions in the pathway protein degradation; proteasomal Pup-dependent pathway. Its activity is regulated as follows. The formation of the proteasomal ATPase ARC-20S proteasome complex, likely via the docking of the C-termini of ARC into the intersubunit pockets in the alpha-rings, may trigger opening of the gate for substrate entry. Interconversion between the open-gate and close-gate conformations leads to a dynamic regulation of the 20S proteasome proteolysis activity. In terms of biological role, component of the proteasome core, a large protease complex with broad specificity involved in protein degradation. The sequence is that of Proteasome subunit alpha from Sanguibacter keddieii (strain ATCC 51767 / DSM 10542 / NCFB 3025 / ST-74).